The following is a 323-amino-acid chain: Pseudouridylate synthase TRUB2, mitochondrial (323 aa).

Catalysis depends on aspartate 98, which acts as the Nucleophile. Positions 302 to 323 (SGHQQQLPSAGQPWASRVQAPL) are disordered.

This sequence belongs to the pseudouridine synthase TruB family. As to quaternary structure, forms a regulatory protein-RNA complex, consisting of RCC1L, NGRN, RPUSD3, RPUSD4, TRUB2, FASTKD2 and 16S mt-rRNA.

It localises to the mitochondrion matrix. The catalysed reaction is a uridine in mRNA = a pseudouridine in mRNA. It carries out the reaction uridine(55) in tRNA = pseudouridine(55) in tRNA. In terms of biological role, minor enzyme contributing to the isomerization of uridine to pseudouridine (pseudouridylation) of specific mitochondrial mRNAs (mt-mRNAs) such as COXI and COXIII mt-mRNAs. As a component of a functional protein-RNA module, consisting of RCC1L, NGRN, RPUSD3, RPUSD4, TRUB2, FASTKD2 and 16S mitochondrial ribosomal RNA (16S mt-rRNA), controls 16S mt-rRNA abundance and is required for intra-mitochondrial translation. Also catalyzes pseudouridylation of some tRNAs, including synthesis of pseudouridine(55) from uracil-55, in the psi GC loop of a subset of tRNAs. The protein is Pseudouridylate synthase TRUB2, mitochondrial of Rattus norvegicus (Rat).